An 825-amino-acid polypeptide reads, in one-letter code: Quinic acid utilization activator (825 aa).

Positions M1–N12 are enriched in polar residues. The tract at residues M1 to V45 is disordered. The segment covering R18 to R28 has biased composition (basic and acidic residues). The zn(2)-C6 fungal-type DNA-binding region spans C49–C76. Disordered regions lie at residues E160–L186, Q204–L224, and G658–G683. The segment covering D165 to I174 has biased composition (basic and acidic residues). Over residues G658 to H672 the composition is skewed to polar residues.

It is found in the nucleus. Functionally, transcription activation of genes for enzymes and proteins of quinate metabolism by binding to a 16 base-pair sequence (consensus 5'-GGATAANNNNTTATCC-3') in front of each qut gene. This Emericella nidulans (strain FGSC A4 / ATCC 38163 / CBS 112.46 / NRRL 194 / M139) (Aspergillus nidulans) protein is Quinic acid utilization activator (qutA).